We begin with the raw amino-acid sequence, 1196 residues long: DNA-directed RNA polymerase subunit 2 (1196 aa).

Positions 1074-1095 (SRARGPTQLLTRQAPEGRSRDG) are disordered. The segment at 1133 to 1154 (CDSCGQFAHKVPEKKYYTCTGC) adopts a C4-type zinc-finger fold.

This sequence belongs to the RNA polymerase beta chain family.

Its subcellular location is the virion. It catalyses the reaction RNA(n) + a ribonucleoside 5'-triphosphate = RNA(n+1) + diphosphate. Functionally, DNA-dependent RNA polymerase catalyzes the transcription of DNA into RNA using the four ribonucleoside triphosphates as substrates. In Acanthamoeba polyphaga mimivirus (APMV), this protein is DNA-directed RNA polymerase subunit 2 (RPO2).